Here is a 228-residue protein sequence, read N- to C-terminus: 5'-methylthioadenosine/S-adenosylhomocysteine nucleosidase (228 aa).

E11 functions as the Proton acceptor in the catalytic mechanism. Residues G77, I151, and 172–173 (ME) each bind substrate. Catalysis depends on D196, which acts as the Proton donor.

Belongs to the PNP/UDP phosphorylase family. MtnN subfamily.

The catalysed reaction is S-adenosyl-L-homocysteine + H2O = S-(5-deoxy-D-ribos-5-yl)-L-homocysteine + adenine. It carries out the reaction S-methyl-5'-thioadenosine + H2O = 5-(methylsulfanyl)-D-ribose + adenine. The enzyme catalyses 5'-deoxyadenosine + H2O = 5-deoxy-D-ribose + adenine. It participates in amino-acid biosynthesis; L-methionine biosynthesis via salvage pathway; S-methyl-5-thio-alpha-D-ribose 1-phosphate from S-methyl-5'-thioadenosine (hydrolase route): step 1/2. Its function is as follows. Catalyzes the irreversible cleavage of the glycosidic bond in both 5'-methylthioadenosine (MTA) and S-adenosylhomocysteine (SAH/AdoHcy) to adenine and the corresponding thioribose, 5'-methylthioribose and S-ribosylhomocysteine, respectively. Also cleaves 5'-deoxyadenosine, a toxic by-product of radical S-adenosylmethionine (SAM) enzymes, into 5-deoxyribose and adenine. The chain is 5'-methylthioadenosine/S-adenosylhomocysteine nucleosidase from Staphylococcus aureus (strain MRSA252).